We begin with the raw amino-acid sequence, 203 residues long: Venom allergen 5 (203 aa).

Intrachain disulfides connect cysteine 4–cysteine 15, cysteine 7–cysteine 100, cysteine 25–cysteine 93, and cysteine 169–cysteine 186. One can recognise an SCP domain in the interval 45 to 188 (KRHNEFRQKV…WHTHYLVCNY (144 aa)).

This sequence belongs to the CRISP family. Venom allergen 5-like subfamily. Expressed by the venom gland.

It localises to the secreted. The chain is Venom allergen 5 from Dolichovespula arenaria (Yellow hornet).